The sequence spans 287 residues: Isopentenyl-diphosphate Delta-isomerase I (287 aa).

The region spanning 105–257 (LLHRAFSVFL…GVKLSPWFRL (153 aa)) is the Nudix hydrolase domain. Catalysis depends on residues Cys-142 and Tyr-207.

It belongs to the IPP isomerase type 1 family.

The catalysed reaction is isopentenyl diphosphate = dimethylallyl diphosphate. It participates in isoprenoid biosynthesis; dimethylallyl diphosphate biosynthesis; dimethylallyl diphosphate from isopentenyl diphosphate: step 1/1. The protein operates within porphyrin-containing compound metabolism; chlorophyll biosynthesis. Its function is as follows. Catalyzes the 1,3-allylic rearrangement of the homoallylic substrate isopentenyl (IPP) to its highly electrophilic allylic isomer, dimethylallyl diphosphate (DMAPP). The polypeptide is Isopentenyl-diphosphate Delta-isomerase I (IPI1) (Clarkia breweri (Fairy fans)).